Reading from the N-terminus, the 29-residue chain is Glucagon (29 aa).

The protein belongs to the glucagon family.

The protein resides in the secreted. In terms of biological role, glucagon plays a key role in glucose metabolism and homeostasis. Regulates blood glucose by increasing gluconeogenesis and decreasing glycolysis. The polypeptide is Glucagon (GCG) (Meleagris gallopavo (Wild turkey)).